Reading from the N-terminus, the 354-residue chain is tRNA-specific 2-thiouridylase MnmA (354 aa).

Residues 6–13 (LLSGGVDS) and Leu33 each bind ATP. Cys100 acts as the Nucleophile in catalysis. A disulfide bridge connects residues Cys100 and Cys195. Gly123 is an ATP binding site. The tract at residues 145 to 147 (KDQ) is interaction with tRNA. Cys195 serves as the catalytic Cysteine persulfide intermediate.

This sequence belongs to the MnmA/TRMU family.

The protein resides in the cytoplasm. It catalyses the reaction S-sulfanyl-L-cysteinyl-[protein] + uridine(34) in tRNA + AH2 + ATP = 2-thiouridine(34) in tRNA + L-cysteinyl-[protein] + A + AMP + diphosphate + H(+). Its function is as follows. Catalyzes the 2-thiolation of uridine at the wobble position (U34) of tRNA, leading to the formation of s(2)U34. In Borrelia duttonii (strain Ly), this protein is tRNA-specific 2-thiouridylase MnmA.